A 513-amino-acid chain; its full sequence is MNIDLAALNAGTLWPEYIVTITLIVVLLVDLISGRKASWSLPYLALLGLGIATATLLPMWILENPVSFLGSFTADPLSVVFRAFILISAALTVLMSVRYINQSSLATAEFYVLLLGATLGAMLLSGSSEMAMIFVALELLSITSYLLSGYAKLDKRSNEASLKYLLIGAASSGIFLYGMSLLYGFSGGQTQLTEIAPRIVNLGFPALLSLVLVAAGICFKLSAVPFHQWTPDVYEGSPTPVVAFLSVGSKAAGFALAIRFMTSAYPGFSEQWQTLFVLLAILSMVLGNVVAIAQTSMKRMLAYSSIAQAGYVMIGLAIGTQEGYSSMILYIGTYLFMNLGAFMAVVLFSLRTGTDEITAYSGLYQKDPFLTLVLSLCLLSLAGIPPLAGFFGKLYLFWAAVQSQAYTLVFFGLVTSVASIYYYVRVVKLMLVKEPSPQVLAYSEAGDQDGIQTLKAGMLITTVATVVLGILFPPLISLADTSLRATPSLQQVRTATPVSRVSTGAQAPADHGR.

The next 14 helical transmembrane spans lie at 12–32 (TLWPEYIVTITLIVVLLVDLI), 41–61 (LPYLALLGLGIATATLLPMWI), 77–97 (LSVVFRAFILISAALTVLMSV), 104–124 (SLATAEFYVLLLGATLGAMLL), 130–150 (MAMIFVALELLSITSYLLSGY), 165–185 (LLIGAASSGIFLYGMSLLYGF), 199–219 (IVNLGFPALLSLVLVAAGICF), 238–258 (PTPVVAFLSVGSKAAGFALAI), 272–292 (WQTLFVLLAILSMVLGNVVAI), 300–320 (MLAYSSIAQAGYVMIGLAIGT), 328–348 (ILYIGTYLFMNLGAFMAVVLF), 372–392 (LVLSLCLLSLAGIPPLAGFFG), 394–414 (LYLFWAAVQSQAYTLVFFGLV), and 456–476 (AGMLITTVATVVLGILFPPLI). Over residues 494-505 (TATPVSRVSTGA) the composition is skewed to polar residues. The disordered stretch occupies residues 494–513 (TATPVSRVSTGAQAPADHGR).

It belongs to the complex I subunit 2 family. In terms of assembly, NDH-1 can be composed of about 15 different subunits; different subcomplexes with different compositions have been identified which probably have different functions.

It localises to the cell inner membrane. It catalyses the reaction a plastoquinone + NADH + (n+1) H(+)(in) = a plastoquinol + NAD(+) + n H(+)(out). It carries out the reaction a plastoquinone + NADPH + (n+1) H(+)(in) = a plastoquinol + NADP(+) + n H(+)(out). In terms of biological role, NDH-1 shuttles electrons from an unknown electron donor, via FMN and iron-sulfur (Fe-S) centers, to quinones in the respiratory and/or the photosynthetic chain. The immediate electron acceptor for the enzyme in this species is believed to be plastoquinone. Couples the redox reaction to proton translocation, and thus conserves the redox energy in a proton gradient. Cyanobacterial NDH-1 also plays a role in inorganic carbon-concentration. This is NAD(P)H-quinone oxidoreductase subunit 2 from Gloeobacter violaceus (strain ATCC 29082 / PCC 7421).